A 155-amino-acid polypeptide reads, in one-letter code: Lipoprotein signal peptidase (155 aa).

4 helical membrane passes run 7–27 (WFWI…YITV), 39–59 (IIPG…FSAF), 63–83 (VGWL…FAYF), and 96–116 (GFIL…GYVV). Active-site residues include Asp-117 and Asp-133. A helical membrane pass occupies residues 126–146 (FPVFNLADVFINIGIICLLIS).

The protein belongs to the peptidase A8 family.

The protein resides in the cell inner membrane. It carries out the reaction Release of signal peptides from bacterial membrane prolipoproteins. Hydrolyzes -Xaa-Yaa-Zaa-|-(S,diacylglyceryl)Cys-, in which Xaa is hydrophobic (preferably Leu), and Yaa (Ala or Ser) and Zaa (Gly or Ala) have small, neutral side chains.. It functions in the pathway protein modification; lipoprotein biosynthesis (signal peptide cleavage). This protein specifically catalyzes the removal of signal peptides from prolipoproteins. The chain is Lipoprotein signal peptidase from Microcystis aeruginosa (strain NIES-843 / IAM M-2473).